The primary structure comprises 285 residues: Sulfoquinovosyl glycerol transport system permease protein SmoH (285 aa).

A run of 6 helical transmembrane segments spans residues 21 to 41, 83 to 103, 115 to 135, 150 to 170, 195 to 215, and 250 to 270; these read FIAASILLVNGLFPAIWILFT, FMVALLSTALTILISVLAAYA, ILSLIIAVSTFPLVTLLVPLF, LILPYTVLSLPVCTLMLVSFF, VVVPLCAPGVFTAGILAFVNA, and PVISAALVVGIVPVAILIVIF. The ABC transmembrane type-1 domain maps to 79-270; that stretch reads LFNSFMVALL…VPVAILIVIF (192 aa).

It belongs to the binding-protein-dependent transport system permease family. The complex is probably composed of two ATP-binding proteins (SmoE), two transmembrane proteins (SmoG and SmoH) and a solute-binding protein (SmoF).

The protein resides in the cell inner membrane. Part of the ABC transporter complex SmoEFGH involved in sulfoquinovosyl glycerol (SQGro) uptake. Responsible for the translocation of the substrate across the membrane. This Agrobacterium fabrum (strain C58 / ATCC 33970) (Agrobacterium tumefaciens (strain C58)) protein is Sulfoquinovosyl glycerol transport system permease protein SmoH.